Consider the following 650-residue polypeptide: MGIKGLTKFIADAAPNAIKEIKIESLMGRIIAIDASMSLYQFIIAIRDSEQYGNLTNESGETTSHISGLMSRSIRLMENGLKPIYVFDGAPPELKGSELEKRGEKRQKAEELLKKAKEEGNLEEIKKQSGRTVRVTRKQNEEAKKLLTLMGIPIIEAPCEAESQCAFLTKYNLAHATATEDADALVFGTKILIRNLNANATSNQNKNKNNSKRGYILTEINLEQVLKGLNLTMDEFIDFCILCGCDYCDTIKGIGSKTAYNLIKEYNCIEKIIENIDQNKYQVPSNFRFQEARKSFINPNVLPKEDIKIDWNEPQIEELKHFLIKDYNFNELRVTNYINRLLKARKVTTQRRLDNFFTACTKKSTKLIVEETKKEQTLPARKGKKRPTAGDKNKQKAVKRKIEQANANGHHKMKEENKSVDNEKNEDGIKSVDNEKNEDGIKSVDDEKNLDDEKNLDDEKNKDDEKKSLDNFSSNLFDSDKESESGNIIKNEKQNMDDEKINDNLPSLFGDHSRIRHTENKDNISDINNNNNNNNNNSSSNNNNISNNHFNSVSSNSTFNSSTKLKSEDTLKSNSPLKEDSPNSYNNIKNNNHTININSQINNHKEPISNNNLNNINNSTEIKKKNTLFLLPFCPKDVTNVKKKKYTQRC.

The tract at residues 1 to 106 (MGIKGLTKFI…SELEKRGEKR (106 aa)) is N-domain. Position 34 (aspartate 34) interacts with Mg(2+). Arginine 47 and arginine 72 together coordinate DNA. The Mg(2+) site is built by aspartate 88, glutamate 160, glutamate 162, aspartate 181, and aspartate 183. The tract at residues 124–266 (EIKKQSGRTV…KTAYNLIKEY (143 aa)) is I-domain. Residue glutamate 160 coordinates DNA. Positions 244 and 246 each coordinate DNA. Residue aspartate 246 coordinates Mg(2+). The segment at 349–357 (TQRRLDNFF) is interaction with PCNA. Positions 371–592 (ETKKEQTLPA…NSYNNIKNNN (222 aa)) are disordered. 3 stretches are compositionally biased toward basic and acidic residues: residues 413–469 (MKEE…KKSL), 478–502 (DSDK…EKIN), and 511–524 (DHSR…KDNI). Over residues 525 to 562 (SDINNNNNNNNNNSSSNNNNISNNHFNSVSSNSTFNSS) the composition is skewed to low complexity. Over residues 565-581 (LKSEDTLKSNSPLKEDS) the composition is skewed to basic and acidic residues. The span at 582 to 592 (PNSYNNIKNNN) shows a compositional bias: low complexity.

The protein belongs to the XPG/RAD2 endonuclease family. FEN1 subfamily. As to quaternary structure, interacts with PCNA1 and PCNA2. Three molecules of FEN1 bind to one PCNA trimer with each molecule binding to one PCNA monomer. PCNA stimulates the nuclease activity without altering cleavage specificity. Requires Mg(2+) as cofactor. Post-translationally, phosphorylated. Phosphorylation upon DNA damage induces relocalization to the nuclear plasma.

The protein localises to the nucleus. It localises to the nucleolus. The protein resides in the nucleoplasm. It is found in the mitochondrion. With respect to regulation, inhibited by monovalent metal ions. Structure-specific nuclease with 5'-flap endonuclease and 5'-3' exonuclease activities involved in DNA replication and repair. During DNA replication, cleaves the 5'-overhanging flap structure that is generated by displacement synthesis when DNA polymerase encounters the 5'-end of a downstream Okazaki fragment. It enters the flap from the 5'-end and then tracks to cleave the flap base, leaving a nick for ligation. Also involved in the long patch base excision repair (LP-BER) pathway, by cleaving within the apurinic/apyrimidinic (AP) site-terminated flap. Acts as a genome stabilization factor that prevents flaps from equilibrating into structures that lead to duplications and deletions. Also possesses 5'-3' exonuclease activity on nicked or gapped double-stranded DNA, and exhibits RNase H activity. Also involved in replication and repair of rDNA and in repairing mitochondrial DNA. This Plasmodium falciparum protein is Flap endonuclease 1.